The following is a 198-amino-acid chain: Recombination protein RecR (198 aa).

Residues 57–72 (CSSCGHITDKDPCYIC) form a C4-type zinc finger. One can recognise a Toprim domain in the interval 80-175 (SIICVVQDPK…KITRIAHGLP (96 aa)).

This sequence belongs to the RecR family.

Its function is as follows. May play a role in DNA repair. It seems to be involved in an RecBC-independent recombinational process of DNA repair. It may act with RecF and RecO. The protein is Recombination protein RecR of Anoxybacillus flavithermus (strain DSM 21510 / WK1).